A 358-amino-acid polypeptide reads, in one-letter code: Alanine racemase (358 aa).

Lysine 35 (proton acceptor; specific for D-alanine) is an active-site residue. The residue at position 35 (lysine 35) is an N6-(pyridoxal phosphate)lysine. Arginine 130 serves as a coordination point for substrate. The active-site Proton acceptor; specific for L-alanine is tyrosine 255. A substrate-binding site is contributed by methionine 303.

The protein belongs to the alanine racemase family. Pyridoxal 5'-phosphate is required as a cofactor.

The enzyme catalyses L-alanine = D-alanine. It functions in the pathway amino-acid biosynthesis; D-alanine biosynthesis; D-alanine from L-alanine: step 1/1. In terms of biological role, catalyzes the interconversion of L-alanine and D-alanine. May also act on other amino acids. The chain is Alanine racemase (alr) from Shewanella sp. (strain ANA-3).